We begin with the raw amino-acid sequence, 135 residues long: Ribosome-binding factor A (135 aa).

Belongs to the RbfA family. In terms of assembly, monomer. Binds 30S ribosomal subunits, but not 50S ribosomal subunits or 70S ribosomes.

The protein resides in the cytoplasm. In terms of biological role, one of several proteins that assist in the late maturation steps of the functional core of the 30S ribosomal subunit. Associates with free 30S ribosomal subunits (but not with 30S subunits that are part of 70S ribosomes or polysomes). Required for efficient processing of 16S rRNA. May interact with the 5'-terminal helix region of 16S rRNA. The polypeptide is Ribosome-binding factor A (Bartonella quintana (strain Toulouse) (Rochalimaea quintana)).